We begin with the raw amino-acid sequence, 153 residues long: UPF0768 protein PB2B2.18 (153 aa).

The protein belongs to the UPF0768 family.

This is UPF0768 protein PB2B2.18 from Schizosaccharomyces pombe (strain 972 / ATCC 24843) (Fission yeast).